The chain runs to 223 residues: TAENPFTCPECGKRFSQKSNCWHTEDHTGEKPFTCMECSKSFTVKSSLLSHQRVHTGEKPYTCTQCNKQFSHSAQLRAHISTHTGVGPFPCTECSKTFSLKHKLYKHQRIHTGEKPFQCLECGKSFSVKHGLLKHQRSHTGEKPYACSECQKTFAHKTTLMVHERIHTGERPYECNDCGKRFIHSTNLNCHQKIHSGEKPFTCTECGKSFSLKNKLVRHQKIH.

8 C2H2-type zinc fingers span residues 6 to 27 (FTCP…TEDH), 33 to 55 (FTCM…QRVH), 61 to 83 (YTCT…ISTH), 89 to 111 (FPCT…QRIH), 117 to 139 (FQCL…QRSH), 145 to 167 (YACS…ERIH), 173 to 195 (YECN…QKIH), and 201 to 223 (FTCT…QKIH).

The protein belongs to the krueppel C2H2-type zinc-finger protein family.

Its subcellular location is the nucleus. Its function is as follows. May be involved in transcriptional regulation. The protein is Gastrula zinc finger protein XlCGF52.1 of Xenopus laevis (African clawed frog).